The following is a 639-amino-acid chain: uncharacterized protein (639 aa).

This is an uncharacterized protein from Mus musculus (Mouse).